A 439-amino-acid polypeptide reads, in one-letter code: Histidine--tRNA ligase (439 aa).

Belongs to the class-II aminoacyl-tRNA synthetase family. As to quaternary structure, homodimer.

Its subcellular location is the cytoplasm. It catalyses the reaction tRNA(His) + L-histidine + ATP = L-histidyl-tRNA(His) + AMP + diphosphate + H(+). This chain is Histidine--tRNA ligase, found in Leptospira interrogans serogroup Icterohaemorrhagiae serovar copenhageni (strain Fiocruz L1-130).